Here is a 1616-residue protein sequence, read N- to C-terminus: Putative inactive phenolphthiocerol synthesis polyketide synthase type I Pks1 (1616 aa).

Residues 83-397 (TVVVFPGQGA…GQVFTTGVPV (315 aa)) form an acyltransferase region. Residue Ser-174 is the For acyltransferase activity of the active site. The N-terminal hotdog fold stretch occupies residues 445-567 (HALLGAVVER…GMLGVAAAET (123 aa)). Residues 445–605 (HALLGAVVER…YAYGPAFQGL (161 aa)) are dehydratase. Residues 445-719 (HALLGAVVER…TRPITAEQLR (275 aa)) enclose the PKS/mFAS DH domain. The active-site Proton acceptor; for dehydratase activity is His-477. Residues 579–719 (AESVDISDGY…TRPITAEQLR (141 aa)) form a C-terminal hotdog fold region. Asp-640 serves as the catalytic Proton donor; for dehydratase activity. An enoylreductase region spans residues 910 to 1215 (GTLEDLVIQP…QARHIGKVVL (306 aa)). NADP(+) is bound by residues 1040–1057 (VLIHAGTGGVGMAAVQLA) and 1229–1244 (TVVITGATGAVGGVLA). The interval 1228 to 1409 (GTVVITGATG…SLAWGLWEQP (182 aa)) is beta-ketoacyl reductase. Positions 1514-1589 (ELLVGLVCLQ…AVAEYVAQQM (76 aa)) constitute a Carrier domain. Ser-1549 carries the post-translational modification O-(pantetheine 4'-phosphoryl)serine. The span at 1588 to 1604 (QMSGSRPTESGDPTSQV) shows a compositional bias: polar residues. The disordered stretch occupies residues 1588–1616 (QMSGSRPTESGDPTSQVVEPAAAEVSVHA).

Pantetheine 4'-phosphate is required as a cofactor.

The protein operates within lipid metabolism; fatty acid biosynthesis. In terms of biological role, may play a role in phthiocerol biosynthesis. The chain is Putative inactive phenolphthiocerol synthesis polyketide synthase type I Pks1 (pks1) from Mycobacterium tuberculosis (strain ATCC 25618 / H37Rv).